The sequence spans 427 residues: Piwi protein (427 aa).

The segment at 38–167 (PYEVPSLKYN…VQFVSKLGGK (130 aa)) is mid domain. The region spanning 110-406 (GIMLVLPEYN…VAGIIANVNR (297 aa)) is the Piwi domain. The binds 5'-phosphorylated end of guide DNA stretch occupies residues 118–124 (YNTPLYY). Residues 147 to 148 (RN) are binds target DNA. Positions 150 to 155 (TFYVDN) are binds guide DNA. The a divalent metal cation site is built by Q159 and L427. Residues 168-427 (PWILNVDPEK…RSLQTNPWFL (260 aa)) are PIWI domain.

Belongs to the argonaute family. Short pAgo subfamily. As to quaternary structure, homodimer probably stabilized by DNA. Each subunit is capable of interacting with a DNA molecule. It depends on a divalent metal cation as a cofactor.

In terms of biological role, might play a role in defense against invading genetic elements, using short nucleic acid sequences as guides to bind complementary target strands, resulting in slicing of the target nucleic acid. Binds nucleic acids with decreasing affinity in the following order; ssDNA, ssRNA, dsDNA, RNA-DNA, RNA-RNA. Association of the 5' seed region of the guide strand (nucleotides 2-7) with AfPiwi increases affinity for the corresponding target strand; the greatest increase in affinity is for guide DNA with target RNA. The protein is Piwi protein of Archaeoglobus fulgidus (strain ATCC 49558 / DSM 4304 / JCM 9628 / NBRC 100126 / VC-16).